The primary structure comprises 207 residues: MVATCLQVVGFVTSFVGWIGIIVTTSTNDWVVTCSYTIPTCRKMDELGSKGLWADCVMATGLYHCKPLVDILILPGYVQACRALMIAASVLGLPAILLLLTVLPCIRMGHEPGVAKYRRAQLAGVLLILLALCAIVATIWFPVCAHREITIVSFGYSLYAGWIGAVMCLVGGCVIVCCSGDAQSFGENRFYYSSGSSSPTHAKSAHV.

Position 1 (Met-1) is a topological domain, cytoplasmic. A helical transmembrane segment spans residues 2–22 (VATCLQVVGFVTSFVGWIGII). Topologically, residues 23–82 (VTTSTNDWVVTCSYTIPTCRKMDELGSKGLWADCVMATGLYHCKPLVDILILPGYVQACR) are extracellular. A helical transmembrane segment spans residues 83–103 (ALMIAASVLGLPAILLLLTVL). The Cytoplasmic portion of the chain corresponds to 104 to 122 (PCIRMGHEPGVAKYRRAQL). Residues 123-143 (AGVLLILLALCAIVATIWFPV) traverse the membrane as a helical segment. The Extracellular segment spans residues 144–157 (CAHREITIVSFGYS). The helical transmembrane segment at 158–178 (LYAGWIGAVMCLVGGCVIVCC) threads the bilayer. Topologically, residues 179–207 (SGDAQSFGENRFYYSSGSSSPTHAKSAHV) are cytoplasmic. Ser-193, Ser-194, Ser-197, and Ser-198 each carry phosphoserine.

It belongs to the claudin family. As to quaternary structure, interacts with tetraspanin-3/TSPAN3. Interacts with OCLN.

It is found in the cell junction. The protein resides in the tight junction. It localises to the cell membrane. In terms of biological role, plays a major role in tight junction-specific obliteration of the intercellular space, through calcium-independent cell-adhesion activity. The protein is Claudin-11 (Cldn11) of Mus musculus (Mouse).